Here is a 66-residue protein sequence, read N- to C-terminus: Large ribosomal subunit protein bL35 (66 aa).

Residues 1-16 (MPKQKTHRASAKRFKR) show a composition bias toward basic residues. Positions 1 to 21 (MPKQKTHRASAKRFKRTGSGG) are disordered.

This sequence belongs to the bacterial ribosomal protein bL35 family.

This is Large ribosomal subunit protein bL35 from Streptococcus pneumoniae serotype 2 (strain D39 / NCTC 7466).